The primary structure comprises 363 residues: Serpentine receptor class T-55 (363 aa).

The N-terminal stretch at 1-18 (MKLRHFLIFLMLIPISSS) is a signal peptide. 7 consecutive transmembrane segments (helical) span residues 70–90 (IYYISSGLFFQLIGWPVIWVF), 107–127 (VFIGLIEITEIWGNSVFPGFV), 143–163 (IVGKMTMVQWVLGSSSAAFLG), 187–207 (WLTVLFFYACYGSIFFDTVLF), 231–251 (FLYFHNIIVATTLILVYACLC), 278–298 (ICISLTYAIPAISFVTMFVLP), and 303–323 (FFHVSDITYQLSGGLPFIMYI).

It belongs to the nematode receptor-like protein srt family.

It is found in the membrane. In Caenorhabditis elegans, this protein is Serpentine receptor class T-55 (srt-55).